The following is a 247-amino-acid chain: Carboxy-S-adenosyl-L-methionine synthase (247 aa).

Residues Y40, 65–67 (GSS), 90–91 (DN), 122–123 (DI), N137, and R204 contribute to the S-adenosyl-L-methionine site.

Belongs to the class I-like SAM-binding methyltransferase superfamily. Cx-SAM synthase family. As to quaternary structure, homodimer.

It catalyses the reaction prephenate + S-adenosyl-L-methionine = carboxy-S-adenosyl-L-methionine + 3-phenylpyruvate + H2O. Catalyzes the conversion of S-adenosyl-L-methionine (SAM) to carboxy-S-adenosyl-L-methionine (Cx-SAM). This is Carboxy-S-adenosyl-L-methionine synthase from Pseudomonas fluorescens (strain ATCC BAA-477 / NRRL B-23932 / Pf-5).